We begin with the raw amino-acid sequence, 293 residues long: Protein YIF1A (293 aa).

Residues 1–33 form a disordered region; that stretch reads MAYHSGYGAHGSKHRARAAPDPPPLFDDTSGGY. Ala-2 carries the post-translational modification N-acetylalanine. At 2–138 the chain is on the cytoplasmic side; sequence AYHSGYGAHG…PPRQDLNAPD (137 aa). The residue at position 12 (Ser-12) is a Phosphoserine. The helical transmembrane segment at 139 to 159 threads the bilayer; that stretch reads LYIPTMAFITYVLLAGMALGI. Residues 160-174 lie on the Lumenal side of the membrane; that stretch reads QKRFSPEVLGLCAST. Residues 175 to 195 traverse the membrane as a helical segment; sequence ALVWVVMEVLALLLGLYLATV. Residues 196-203 are Cytoplasmic-facing; sequence RSDLSTFH. Residues 204 to 226 form a helical membrane-spanning segment; that stretch reads LLAYSGYKYVGMILSVLTGLLFG. The Lumenal portion of the chain corresponds to 227 to 229; the sequence is SDG. Residues 230 to 249 form a helical membrane-spanning segment; sequence YYVALAWTSSALMYFIVRSL. Residues 250–271 lie on the Cytoplasmic side of the membrane; sequence RTAALGPDSMGGPVPRQRLQLY. A helical membrane pass occupies residues 272-292; it reads LTLGAAAFQPLIIYWLTFHLV.

It belongs to the YIF1 family. In terms of assembly, interacts with YIPF5.

The protein resides in the endoplasmic reticulum membrane. Its subcellular location is the golgi apparatus membrane. It is found in the endoplasmic reticulum-Golgi intermediate compartment membrane. In terms of biological role, possible role in transport between endoplasmic reticulum and Golgi. This is Protein YIF1A (YIF1A) from Homo sapiens (Human).